The following is a 287-amino-acid chain: 4-hydroxybenzoate octaprenyltransferase (287 aa).

The next 8 helical transmembrane spans lie at 23–43, 46–66, 99–119, 141–161, 162–182, 213–233, 237–257, and 266–286; these read IGSL…GGTA, GKLL…GCVI, LFVL…AMTI, LPQV…YAAV, GESL…WTVA, LVIG…GDLN, GAYY…QQLI, and FRAF…ILLA.

Belongs to the UbiA prenyltransferase family. Mg(2+) serves as cofactor.

It localises to the cell inner membrane. The enzyme catalyses all-trans-octaprenyl diphosphate + 4-hydroxybenzoate = 4-hydroxy-3-(all-trans-octaprenyl)benzoate + diphosphate. It participates in cofactor biosynthesis; ubiquinone biosynthesis. Functionally, catalyzes the prenylation of para-hydroxybenzoate (PHB) with an all-trans polyprenyl group. Mediates the second step in the final reaction sequence of ubiquinone-8 (UQ-8) biosynthesis, which is the condensation of the polyisoprenoid side chain with PHB, generating the first membrane-bound Q intermediate 3-octaprenyl-4-hydroxybenzoate. The chain is 4-hydroxybenzoate octaprenyltransferase from Edwardsiella ictaluri (strain 93-146).